The following is a 365-amino-acid chain: 3-dehydroquinate synthase (365 aa).

NAD(+) contacts are provided by residues 106–110 (GVIGD), 130–131 (TT), lysine 142, lysine 151, and 169–172 (FFAT). Zn(2+)-binding residues include glutamate 184, histidine 247, and histidine 264.

Belongs to the sugar phosphate cyclases superfamily. Dehydroquinate synthase family. The cofactor is NAD(+). It depends on Co(2+) as a cofactor. Requires Zn(2+) as cofactor.

The protein localises to the cytoplasm. The catalysed reaction is 7-phospho-2-dehydro-3-deoxy-D-arabino-heptonate = 3-dehydroquinate + phosphate. Its pathway is metabolic intermediate biosynthesis; chorismate biosynthesis; chorismate from D-erythrose 4-phosphate and phosphoenolpyruvate: step 2/7. Its function is as follows. Catalyzes the conversion of 3-deoxy-D-arabino-heptulosonate 7-phosphate (DAHP) to dehydroquinate (DHQ). This is 3-dehydroquinate synthase from Listeria monocytogenes serotype 4b (strain F2365).